Here is a 260-residue protein sequence, read N- to C-terminus: MICOS complex subunit mic25-a (260 aa).

Residues 1–92 (MGGSESTGRK…KPTARGVGHQ (92 aa)) form a disordered region. Glycine 2 carries the N-myristoyl glycine lipid modification. Residues 28–39 (RLSDEVVNRMKD) show a composition bias toward basic and acidic residues. A compositionally biased stretch (low complexity) spans 48–64 (STSTASGTTSGPTTFPS). A coiled-coil region spans residues 94 to 187 (AEEDLYRRYE…LNSIEKKNLE (94 aa)). A CHCH domain is found at 213-255 (DPVCMDLQSNILKCYAENKQERLNCSDLAKEYGKCVSAAQKNL). Short sequence motifs (cx9C motif) lie at residues 216–226 (CMDLQSNILKC) and 237–247 (CSDLAKEYGKC). Intrachain disulfides connect cysteine 216-cysteine 247 and cysteine 226-cysteine 237.

Belongs to the MICOS complex subunit Mic19 family. Metazoan Mic25 subfamily. Component of the mitochondrial contact site and cristae organizing system (MICOS) complex (also known as MINOS or MitOS complex).

It is found in the mitochondrion inner membrane. Its function is as follows. Component of the MICOS complex, a large protein complex of the mitochondrial inner membrane that plays crucial roles in the maintenance of crista junctions, inner membrane architecture, and formation of contact sites to the outer membrane. This is MICOS complex subunit mic25-a (chchd6-a) from Xenopus laevis (African clawed frog).